Here is a 132-residue protein sequence, read N- to C-terminus: Small ribosomal subunit protein uS11 (132 aa).

It belongs to the universal ribosomal protein uS11 family. As to quaternary structure, part of the 30S ribosomal subunit.

In terms of biological role, located on the platform of the 30S subunit. In Sulfolobus acidocaldarius (strain ATCC 33909 / DSM 639 / JCM 8929 / NBRC 15157 / NCIMB 11770), this protein is Small ribosomal subunit protein uS11.